The primary structure comprises 412 residues: Nuclear hormone receptor family member nhr-61 (412 aa).

The segment covering 1 to 19 (MIVDSISSSTASTSSSSPT) has biased composition (low complexity). A disordered region spans residues 1–23 (MIVDSISSSTASTSSSSPTRGTP). A DNA-binding region (nuclear receptor) is located at residues 27–102 (SLQCAVCGDV…VGMNPRAVQG (76 aa)). 2 NR C4-type zinc fingers span residues 30 to 50 (CAVCGDVALGKHYGVNACNGC) and 66 to 90 (CRHGGKCLVAKEQRNACRSCRLTRC). One can recognise an NR LBD domain in the interval 144–407 (KKEQIIDNLR…DWSQELRDHR (264 aa)).

Belongs to the nuclear hormone receptor family.

The protein resides in the nucleus. Orphan nuclear receptor. The sequence is that of Nuclear hormone receptor family member nhr-61 (nhr-61) from Caenorhabditis elegans.